The chain runs to 131 residues: Transcription antitermination protein NusB (131 aa).

It belongs to the NusB family.

In terms of biological role, involved in transcription antitermination. Required for transcription of ribosomal RNA (rRNA) genes. Binds specifically to the boxA antiterminator sequence of the ribosomal RNA (rrn) operons. The sequence is that of Transcription antitermination protein NusB from Aliarcobacter butzleri (strain RM4018) (Arcobacter butzleri).